We begin with the raw amino-acid sequence, 330 residues long: Fructose-1,6-bisphosphatase class 1 (330 aa).

Mg(2+)-binding residues include Glu-78, Asp-97, Leu-99, and Asp-100. Residues 100 to 103 (DGSS) and Asn-188 contribute to the substrate site. Glu-260 serves as a coordination point for Mg(2+).

It belongs to the FBPase class 1 family. As to quaternary structure, homotetramer. Mg(2+) is required as a cofactor.

Its subcellular location is the cytoplasm. It carries out the reaction beta-D-fructose 1,6-bisphosphate + H2O = beta-D-fructose 6-phosphate + phosphate. It participates in carbohydrate biosynthesis; gluconeogenesis. The protein is Fructose-1,6-bisphosphatase class 1 of Paracoccus denitrificans (strain Pd 1222).